The primary structure comprises 198 residues: Elongation factor Ts (198 aa).

The interval 82 to 85 (TDFV) is involved in Mg(2+) ion dislocation from EF-Tu.

Belongs to the EF-Ts family.

It localises to the cytoplasm. Associates with the EF-Tu.GDP complex and induces the exchange of GDP to GTP. It remains bound to the aminoacyl-tRNA.EF-Tu.GTP complex up to the GTP hydrolysis stage on the ribosome. The sequence is that of Elongation factor Ts from Oleidesulfovibrio alaskensis (strain ATCC BAA-1058 / DSM 17464 / G20) (Desulfovibrio alaskensis).